We begin with the raw amino-acid sequence, 247 residues long: Geranylgeranylglyceryl phosphate synthase (247 aa).

Mg(2+) contacts are provided by Asp-23 and Ser-52. Sn-glycerol 1-phosphate-binding positions include 171-177, 203-204, and 225-226; these read YLEAGSG, GG, and GT.

It belongs to the GGGP/HepGP synthase family. Group II subfamily. Requires Mg(2+) as cofactor.

It localises to the cytoplasm. It catalyses the reaction sn-glycerol 1-phosphate + (2E,6E,10E)-geranylgeranyl diphosphate = sn-3-O-(geranylgeranyl)glycerol 1-phosphate + diphosphate. Its pathway is membrane lipid metabolism; glycerophospholipid metabolism. Prenyltransferase that catalyzes the transfer of the geranylgeranyl moiety of geranylgeranyl diphosphate (GGPP) to the C3 hydroxyl of sn-glycerol-1-phosphate (G1P). This reaction is the first ether-bond-formation step in the biosynthesis of archaeal membrane lipids. The protein is Geranylgeranylglyceryl phosphate synthase of Methanococcoides burtonii (strain DSM 6242 / NBRC 107633 / OCM 468 / ACE-M).